The chain runs to 280 residues: F420-dependent methylenetetrahydromethanopterin dehydrogenase (280 aa).

It belongs to the MTD family.

The enzyme catalyses 5,10-methylenetetrahydromethanopterin + oxidized coenzyme F420-(gamma-L-Glu)(n) + 2 H(+) = 5,10-methenyl-5,6,7,8-tetrahydromethanopterin + reduced coenzyme F420-(gamma-L-Glu)(n). It functions in the pathway one-carbon metabolism; methanogenesis from CO(2); 5,10-methylene-5,6,7,8-tetrahydromethanopterin from 5,10-methenyl-5,6,7,8-tetrahydromethanopterin (coenzyme F420 route): step 1/1. Catalyzes the reversible reduction of methenyl-H(4)MPT(+) to methylene-H(4)MPT. The polypeptide is F420-dependent methylenetetrahydromethanopterin dehydrogenase (Methanocorpusculum labreanum (strain ATCC 43576 / DSM 4855 / Z)).